The chain runs to 687 residues: Glycine--tRNA ligase beta subunit (687 aa).

Belongs to the class-II aminoacyl-tRNA synthetase family. As to quaternary structure, tetramer of two alpha and two beta subunits.

Its subcellular location is the cytoplasm. The enzyme catalyses tRNA(Gly) + glycine + ATP = glycyl-tRNA(Gly) + AMP + diphosphate. This Ruegeria sp. (strain TM1040) (Silicibacter sp.) protein is Glycine--tRNA ligase beta subunit.